The chain runs to 406 residues: uncharacterized protein (406 aa).

This sequence belongs to the mycobacterial PPE family.

This is an uncharacterized protein from Mycobacterium tuberculosis (strain CDC 1551 / Oshkosh).